Here is a 283-residue protein sequence, read N- to C-terminus: 2-dehydro-3-deoxyphosphooctonate aldolase (283 aa).

It belongs to the KdsA family.

It is found in the cytoplasm. It catalyses the reaction D-arabinose 5-phosphate + phosphoenolpyruvate + H2O = 3-deoxy-alpha-D-manno-2-octulosonate-8-phosphate + phosphate. It functions in the pathway carbohydrate biosynthesis; 3-deoxy-D-manno-octulosonate biosynthesis; 3-deoxy-D-manno-octulosonate from D-ribulose 5-phosphate: step 2/3. It participates in bacterial outer membrane biogenesis; lipopolysaccharide biosynthesis. In Vibrio campbellii (strain ATCC BAA-1116), this protein is 2-dehydro-3-deoxyphosphooctonate aldolase.